Here is a 405-residue protein sequence, read N- to C-terminus: Probable dual specificity protein kinase YAK1 homolog (405 aa).

The Protein kinase domain maps to tyrosine 40 to leucine 335. ATP contacts are provided by residues leucine 46–valine 54 and lysine 68. Aspartate 163 (proton acceptor) is an active-site residue.

Belongs to the protein kinase superfamily. CMGC Ser/Thr protein kinase family. MNB/DYRK subfamily.

It is found in the cytoplasm. The protein localises to the nucleus. The catalysed reaction is L-seryl-[protein] + ATP = O-phospho-L-seryl-[protein] + ADP + H(+). It catalyses the reaction L-threonyl-[protein] + ATP = O-phospho-L-threonyl-[protein] + ADP + H(+). It carries out the reaction L-tyrosyl-[protein] + ATP = O-phospho-L-tyrosyl-[protein] + ADP + H(+). Its function is as follows. Negative regulator of the cell cycle acting downstream of the cAMP-dependent protein kinase. Part of a glucose-sensing system involved in growth control in response to glucose availability. The polypeptide is Probable dual specificity protein kinase YAK1 homolog (YAK1) (Encephalitozoon cuniculi (strain GB-M1) (Microsporidian parasite)).